Consider the following 961-residue polypeptide: Mitogen-activated protein kinase kinase kinase 13-B (961 aa).

Positions 89-115 (RDQDEPENTAPQGSSHSGDGGNNSANE) are disordered. Residues 101 to 114 (GSSHSGDGGNNSAN) show a composition bias toward low complexity. Residues 171-412 (ISELQWLGSG…FRQILMHLDI (242 aa)) enclose the Protein kinase domain. Residues 177-185 (LGSGAQGAV) and K198 contribute to the ATP site. D282 (proton acceptor) is an active-site residue. 2 leucine-zipper regions span residues 436 to 457 (VKKH…DEEL) and 489 to 510 (LSSI…EQTV). Positions 460–497 (RRREELRHALDIREHYERKLERANNLYMELSSIMLQLE) form a coiled coil. 3 disordered regions span residues 507–644 (EQTV…ETSQ), 796–874 (TPPA…DVAC), and 933–961 (NAES…SSTW). The segment covering 563–580 (AEGSAASASPISGSPKTS) has biased composition (low complexity). Residues 586 to 598 (GRYRSKPRHRRGN) are compositionally biased toward basic residues. The segment covering 613 to 628 (QESPAPSQQSSQHQTP) has biased composition (low complexity). Residues 813-826 (DSSEGEEGEVDSEV) are compositionally biased toward acidic residues. The interval 814-827 (SSEGEEGEVDSEVE) is acidic. The segment covering 839–854 (STCQSYSTFSSENFSV) has biased composition (polar residues). The segment covering 934-945 (AESDCDSSEGEC) has biased composition (acidic residues). Positions 949 to 961 (TVRTNNPVNSSTW) are enriched in polar residues.

The protein belongs to the protein kinase superfamily. Ser/Thr protein kinase family.

The protein resides in the cytoplasm. Its subcellular location is the membrane. The enzyme catalyses L-seryl-[protein] + ATP = O-phospho-L-seryl-[protein] + ADP + H(+). It carries out the reaction L-threonyl-[protein] + ATP = O-phospho-L-threonyl-[protein] + ADP + H(+). May have a role in the JNK signaling pathway. In Xenopus laevis (African clawed frog), this protein is Mitogen-activated protein kinase kinase kinase 13-B (map3k13-b).